A 572-amino-acid chain; its full sequence is Mitochondrial chaperone TCM62 (572 aa).

The N-terminal 16 residues, 1–16 (MLRNCLRKLGNHQTKC), are a transit peptide targeting the mitochondrion. Residues 17–471 (SVKTLHTPIY…KANEPNFMTK (455 aa)) are Mitochondrial matrix-facing. Residues 472-488 (VGINAVLSAVILPSEVA) form a helical membrane-spanning segment. Residues 489-572 (FKNAYGYNYY…VYKKPERHKA (84 aa)) lie on the Mitochondrial intermembrane side of the membrane.

It belongs to the chaperonin (HSP60) family. As to quaternary structure, forms a high molecular mass protein complex of approximately 850 kDa.

The protein resides in the mitochondrion inner membrane. Chaperone. Required for the assembly of succinate dehydrogenase subunits. Ensures mitochondrial gene expression at elevated temperatures and prevents heat-aggregation of the ribosomal subunit VAR1. This Saccharomyces cerevisiae (strain ATCC 204508 / S288c) (Baker's yeast) protein is Mitochondrial chaperone TCM62 (TCM62).